Consider the following 640-residue polypeptide: Auxin efflux carrier component 3 (640 aa).

Residues 1–7 (MISWHDL) lie on the Extracellular side of the membrane. Residues 8–28 (YTVLTAVIPLYVAMILAYGSV) form a helical membrane-spanning segment. Residues 29-38 (RWWKIFSPDQ) are Cytoplasmic-facing. Residues 39–59 (CSGINRFVAIFAVPLLSFHFI) form a helical membrane-spanning segment. Valine 51 serves as a coordination point for (indol-3-yl)acetate. Over 60 to 71 (STNNPYAMNLRF) the chain is Extracellular. A helical transmembrane segment spans residues 72–92 (IAADTLQKIIMLSLLVLWANF). Residues 93 to 101 (TRSGSLEWS) are Cytoplasmic-facing. Residues 102–122 (ITIFSLSTLPNTLVMGIPLLI) form a helical membrane-spanning segment. 2 residues coordinate (indol-3-yl)acetate: asparagine 112 and leucine 114. The Extracellular segment spans residues 123–131 (AMYGEYSGS). The chain crosses the membrane as a helical span at residues 132 to 152 (LMVQIVVLQCIIWYTLLLFLF). Residue tyrosine 145 participates in (indol-3-yl)acetate binding. Residues 153-500 (EFRGAKMLIM…LIRNPNTYSS (348 aa)) are Cytoplasmic-facing. Phosphoserine occurs at positions 226, 243, and 283. A disordered region spans residues 310–351 (APNPEFSSTTTSTANKSVNKNPKDVNTNQQTTLPTGGKSNSH). Positions 314 to 348 (EFSSTTTSTANKSVNKNPKDVNTNQQTTLPTGGKS) are enriched in polar residues. A Phosphothreonine modification is found at threonine 322. Serine 366 carries the post-translational modification Phosphoserine. Disordered regions lie at residues 372–391 (AGLN…RSDQ) and 404–471 (SHNG…SQRK). Residues 430-442 (GKEEEAERPKDAE) are compositionally biased toward basic and acidic residues. The span at 449–460 (APNSTAALQSKT) shows a compositional bias: polar residues. The chain crosses the membrane as a helical span at residues 501-521 (LIGLIWALVAFRWHVAMPKII). The Extracellular segment spans residues 522–524 (QQS). A helical membrane pass occupies residues 525–545 (ISILSDAGLGMAMFSLGLFMA). The Cytoplasmic segment spans residues 546-559 (LQPKLIACGNSVAT). A helical transmembrane segment spans residues 560–580 (FAMAVRFLTGPAVMAVAAIAI). The Extracellular portion of the chain corresponds to 581 to 585 (GLRGD). A helical membrane pass occupies residues 586-606 (LLRVAIVQAALPQGIVPFVFA). (indol-3-yl)acetate contacts are provided by isoleucine 600 and valine 601. Topologically, residues 607-619 (KEYNVHPAILSTG) are cytoplasmic. The helical transmembrane segment at 620-640 (VIFGMLIALPITLVYYILLGL) threads the bilayer.

It belongs to the auxin efflux carrier (TC 2.A.69.1) family. As to quaternary structure, homodimer. Predominantly expressed at the lateral side of shoot endodermis cells as well as root pericycle and columella cells.

It localises to the cell membrane. Auxin efflux carrier activity is competitively inhibited by naptalamate (N-1-naphthylphthalamic acid, NPA). Functionally, acts as a component of the auxin efflux carrier; this activity is enhanced when activated by PID-mediated phosphorylation. Seems to be involved in the lateral auxin transport system. Together with PIN4 and PIN7, involved in the connective auxin transport (CAT) that ensures communication across the shoot system, and modulates strigolactone-mediated shoot branching control. Binds auxins including indole-3-acetic acid (IAA). Coordinated polar localization of PIN3 is directly regulated by the vesicle trafficking process. In Arabidopsis thaliana (Mouse-ear cress), this protein is Auxin efflux carrier component 3.